A 303-amino-acid polypeptide reads, in one-letter code: Recombination-associated protein RdgC (303 aa).

Belongs to the RdgC family.

It localises to the cytoplasm. The protein localises to the nucleoid. Functionally, may be involved in recombination. This is Recombination-associated protein RdgC from Shewanella piezotolerans (strain WP3 / JCM 13877).